Reading from the N-terminus, the 251-residue chain is Triosephosphate isomerase (251 aa).

Position 9-11 (9-11) interacts with substrate; that stretch reads NWK. The Electrophile role is filled by histidine 95. Glutamate 167 serves as the catalytic Proton acceptor. Substrate is bound by residues glycine 173, serine 212, and 233-234; that span reads GG.

The protein belongs to the triosephosphate isomerase family. As to quaternary structure, homodimer.

The protein resides in the cytoplasm. The enzyme catalyses D-glyceraldehyde 3-phosphate = dihydroxyacetone phosphate. It participates in carbohydrate biosynthesis; gluconeogenesis. The protein operates within carbohydrate degradation; glycolysis; D-glyceraldehyde 3-phosphate from glycerone phosphate: step 1/1. Functionally, involved in the gluconeogenesis. Catalyzes stereospecifically the conversion of dihydroxyacetone phosphate (DHAP) to D-glyceraldehyde-3-phosphate (G3P). In Pseudomonas syringae pv. tomato (strain ATCC BAA-871 / DC3000), this protein is Triosephosphate isomerase.